The primary structure comprises 1059 residues: Ceruloplasmin (1059 aa).

Positions 1-19 are cleaved as a signal peptide; it reads MKFLLLSALLFLHSSLAWT. Plastocyanin-like domains lie at 20–199, 208–356, 369–554, 564–712, 724–894, and 902–1055; these read REKH…LILC, KEEN…VRDC, HVRH…MKIC, RQKD…VNQC, GERT…LIVC, and FNPK…PNQE. Tyr55, Gly64, and Tyr67 together coordinate Na(+). Positions 120 and 122 each coordinate Cu(2+). His120 contributes to the O2 binding site. Ca(2+) is bound at residue Lys128. Asn138 carries an N-linked (GlcNAc...) asparagine glycan. Ca(2+)-binding residues include Gln143, Asp146, and Asp147. Cys173 and Cys199 are disulfide-bonded. 2 residues coordinate Cu(2+): His179 and His181. O2 is bound at residue His179. N-linked (GlcNAc...) asparagine glycosylation occurs at Asn226. Ser255 provides a ligand contact to Na(+). An intrachain disulfide couples Cys275 to Cys356. His294, Cys337, and His342 together coordinate Cu(2+). N-linked (GlcNAc...) asparagine glycosylation occurs at Asn396. 3 residues coordinate Na(+): Phe407, Gly416, and Tyr419. Cys528 and Cys554 are oxidised to a cystine. The N-linked (GlcNAc...) asparagine glycan is linked to Asn582. Position 611 (Ser611) interacts with Na(+). A disulfide bridge connects residues Cys631 and Cys712. Residues His650, Cys693, His698, and Met703 each coordinate Cu(2+). Catalysis depends on Cys693, which acts as the Nucleophile; for glutathione peroxidase activity. Asn756 carries an N-linked (GlcNAc...) asparagine glycan. Na(+) is bound by residues Phe761, Gly770, and Tyr773. The cysteines at positions 868 and 894 are disulfide-linked. Asn920 is a glycosylation site (N-linked (GlcNAc...) asparagine). Ser949 contacts Na(+). The Cu(2+) site is built by His988, His991, His993, His1033, Cys1034, His1035, His1039, and Met1044. The O2 site is built by His991 and His993. Position 1035 (His1035) interacts with O2.

The protein belongs to the multicopper oxidase family. In terms of assembly, found in a complex with MPO and LTF; interacts directly with MPO and LTF, which allows Fe(3+) incorporation into LTF, activation of CP ferroxidase activity and protection of CP antioxidant properties by MPO. Cu(2+) is required as a cofactor. Synthesized in liver and secreted into the plasma. Also choroid plexus, yolk sac, placenta, and testis; not in stomach and small intestine. Fetal lung and liver.

The protein localises to the secreted. The enzyme catalyses 4 Fe(2+) + O2 + 4 H(+) = 4 Fe(3+) + 2 H2O. The catalysed reaction is 4 Cu(+) + O2 + 4 H(+) = 4 Cu(2+) + 2 H2O. It catalyses the reaction a hydroperoxide + 2 glutathione = an alcohol + glutathione disulfide + H2O. It carries out the reaction 4 nitric oxide + O2 + 2 H2O = 4 nitrite + 4 H(+). The enzyme catalyses 2 glutathione + H2O2 = glutathione disulfide + 2 H2O. Multifunctional blue, copper-binding (6-7 atoms per molecule) glycoprotein. It has ferroxidase activity oxidizing Fe(2+) to Fe(3+) without releasing radical oxygen species. It is involved in iron transport across the cell membrane. Copper ions provide a large number of enzymatic activites. Oxidizes highly toxic ferrous ions to the ferric state for further incorporation onto apo-transferrins, catalyzes Cu(+) oxidation and promotes the oxidation of biogenic amines such as norepinephrin and serotonin. Provides Cu(2+) ions for the ascorbate-mediated deaminase degradation of the heparan sulfate chains of GPC1. Has glutathione peroxidase-like activity, can remove both hydrogen peroxide and lipid hydroperoxide in the presence of thiols. Also shows NO-oxidase and NO2 synthase activities that determine endocrine NO homeostasis. The chain is Ceruloplasmin (Cp) from Rattus norvegicus (Rat).